A 178-amino-acid chain; its full sequence is DNA-directed RNA polymerase V subunit 7 (178 aa).

It belongs to the eukaryotic RPB7/RPC8 RNA polymerase subunit family. As to quaternary structure, component of the RNA polymerase V complex.

The protein localises to the nucleus. Functionally, DNA-dependent RNA polymerase catalyzes the transcription of DNA into RNA using the four ribonucleoside triphosphates as substrates. Component of RNA polymerase V involved in RNA-directed DNA methylation-dependent (RdDM) silencing of endogenous repeated sequences, including transposable elements. The sequence is that of DNA-directed RNA polymerase V subunit 7 (NRPE7) from Arabidopsis thaliana (Mouse-ear cress).